The chain runs to 539 residues: uncharacterized protein (539 aa).

ABC transporter domains are found at residues 8 to 265 (VRIT…SRAL) and 307 to 537 (IELD…IGDM). 339–346 (GDNGSGKS) serves as a coordination point for ATP.

The protein belongs to the ABC transporter superfamily.

Its subcellular location is the mitochondrion. This is an uncharacterized protein from Saccharomyces cerevisiae (strain ATCC 204508 / S288c) (Baker's yeast).